A 120-amino-acid chain; its full sequence is Basic phospholipase A2 homolog LmutTX (120 aa).

Cystine bridges form between Cys26–Cys114, Cys28–Cys44, Cys43–Cys95, Cys49–Cys120, Cys50–Cys88, Cys57–Cys81, and Cys75–Cys86.

This sequence belongs to the phospholipase A2 family. Group II subfamily. K49 sub-subfamily. Monomer. As to expression, expressed by the venom gland.

The protein localises to the secreted. Snake venom phospholipase A2 homolog that lacks enzymatic activity. Shows moderate cytotoxicity against C2C12 myotubes (activity above 200 ug/mL). Also shows antibacterial activity against both Gram-positive and Gram-negative bacteria. A model of myotoxic mechanism has been proposed: an apo Lys49-PLA2 is activated by the entrance of a hydrophobic molecule (e.g. fatty acid) at the hydrophobic channel of the protein leading to a reorientation of a monomer. This reorientation causes a transition between 'inactive' to 'active' states, causing alignment of C-terminal and membrane-docking sites (MDoS) side-by-side and putting the membrane-disruption sites (MDiS) in the same plane, exposed to solvent and in a symmetric position for both monomers. The MDoS region stabilizes the toxin on membrane by the interaction of charged residues with phospholipid head groups. Subsequently, the MDiS region destabilizes the membrane with penetration of hydrophobic residues. This insertion causes a disorganization of the membrane, allowing an uncontrolled influx of ions (i.e. calcium and sodium), and eventually triggering irreversible intracellular alterations and cell death. This Lachesis muta muta (Bushmaster) protein is Basic phospholipase A2 homolog LmutTX.